A 161-amino-acid chain; its full sequence is Allophycocyanin beta chain (161 aa).

Asparagine 71 is modified (N4-methylasparagine). Position 81 (cysteine 81) interacts with (2R,3E)-phycocyanobilin.

The protein belongs to the phycobiliprotein family. As to quaternary structure, heterodimer of an alpha and a beta chain. In terms of processing, contains one covalently linked phycocyanobilin chromophore.

The protein resides in the cellular thylakoid membrane. Its function is as follows. Light-harvesting photosynthetic bile pigment-protein from the phycobiliprotein complex. Allophycocyanin has a maximum absorption at approximately 650 nanometers. The sequence is that of Allophycocyanin beta chain (apcB) from Mastigocladus laminosus (Fischerella sp.).